Here is a 233-residue protein sequence, read N- to C-terminus: DNA repair protein RecO (233 aa).

It belongs to the RecO family.

In terms of biological role, involved in DNA repair and RecF pathway recombination. The chain is DNA repair protein RecO from Pseudomonas aeruginosa (strain UCBPP-PA14).